Reading from the N-terminus, the 231-residue chain is MQDEERYMTLNVQSKKRSSAQTSQLTFKDYSVTLHWYKILLGISGTVNGILTLTLISLILLVSQGVLLKCQKGSCSNATQYEDTGDLKVNNGTRRNISNKDLCASRSADQTVLCQSEWLKYQGKCYWFSNEMKSWSDSYVYCLERKSHLLIIHDQLEMAFIQKNLRQLNYVWIGLNFTSLKMTWTWVDGSPIDSKIFFIKGPAKENSCAAIKESKIFSETCSSVFKWICQY.

Topologically, residues 1–38 (MQDEERYMTLNVQSKKRSSAQTSQLTFKDYSVTLHWYK) are cytoplasmic. The residue at position 7 (Tyr-7) is a Phosphotyrosine. Residues 39–59 (ILLGISGTVNGILTLTLISLI) traverse the membrane as a helical; Signal-anchor for type II membrane protein segment. At 60 to 231 (LLVSQGVLLK…SSVFKWICQY (172 aa)) the chain is on the extracellular side. N-linked (GlcNAc...) asparagine glycosylation is found at Asn-77, Asn-91, Asn-96, and Asn-176. Positions 121–230 (YQGKCYWFSN…CSSVFKWICQ (110 aa)) constitute a C-type lectin domain. 2 disulfide bridges follow: Cys-142/Cys-229 and Cys-208/Cys-221.

Homodimer. Interacts with CLEC2B. Phosphorylated on Tyr-7; this phosphorylation is required for NKp80/KLRF1-mediated cytotoxicity. Strongly expressed in peripheral blood leukocytes and spleen, with weaker expression in lymph node and adult liver, and no expression detected in bone marrow, thymus, and fetal liver. Not expressed in brain, heart, placenta, lung, kidney, skeletal muscle, and pancreas. Within peripheral blood leukocyte and immunocyte cell lines, expression was predominant in NK cells but was also detected in monocytes.

Its subcellular location is the membrane. Functionally, functions as an activating receptor involved in immunosurveillance upon binding to various ligands displayed at the surface of myeloid cells. Upon interaction with CLEC2B ligand, stimulates NK-cell cytotoxicity and cytokine production leading to the cytolysis of malignant CLEC2B-expressing myeloid cells. Actviation of the common cytotoxicity pathway involves SRC and SYK kinases. This is Killer cell lectin-like receptor subfamily F member 1 (KLRF1) from Homo sapiens (Human).